Here is a 456-residue protein sequence, read N- to C-terminus: MDSIKGTDEKYLTVSELNWYVKQKFDRDPYLRQIFLQGELSNFRFRRGGHQYFSLKDDKSKINVVMFRGDFDKVKFEPEEGMKVYVTGRLSTYEAQGSYQFYAKSMEPAGLGALYERFRQLQEKLAKEGLFAQEHKRPLPLFPDKIAVVTSASGAVIHDIMVTANRRFSHAEIDLFPAQVQGESAAGSLVSAMQQIQARADEYDVLIIGRGGGSLEDLWPFNEEEVVRQVYAMKMPVISSVGHETDTTLCDLAADCRAATPTAAAEMATPALPLVLAEIGQLQTRLLTDIRAVIQVRAQALAQLENSFIMKEPQRLYEQKMQQVDQLSQQLSRMMEVIVKDQGQKLSLLTQRLQHQAPDRRIKQLKQENSYLAKSLEMGIKRILEQKQAACRQAVQQLDDYSPLKTLARGYSYTTDASGNVVKSVQQLVPGDQVRLHLKDGQAIGRIEEIKEEKND.

This sequence belongs to the XseA family. As to quaternary structure, heterooligomer composed of large and small subunits.

The protein localises to the cytoplasm. The enzyme catalyses Exonucleolytic cleavage in either 5'- to 3'- or 3'- to 5'-direction to yield nucleoside 5'-phosphates.. Bidirectionally degrades single-stranded DNA into large acid-insoluble oligonucleotides, which are then degraded further into small acid-soluble oligonucleotides. The protein is Exodeoxyribonuclease 7 large subunit of Lactobacillus delbrueckii subsp. bulgaricus (strain ATCC 11842 / DSM 20081 / BCRC 10696 / JCM 1002 / NBRC 13953 / NCIMB 11778 / NCTC 12712 / WDCM 00102 / Lb 14).